Here is a 306-residue protein sequence, read N- to C-terminus: HTH-type transcriptional regulator AlkR (306 aa).

Residues 207 to 305 form the HTH araC/xylS-type domain; that stretch reads SNALAAIHAY…EQSPKHYRQQ (99 aa). 2 DNA-binding regions (H-T-H motif) span residues 224 to 245 and 272 to 295; these read ESLADQCCMSRSKFATLFQSIV and IQQIANKVGYSSETAFSQAFKRQF.

Its pathway is hydrocarbon metabolism; alkane degradation. This protein activates the expression of the alkane 1-monooxygenase AlkM. The polypeptide is HTH-type transcriptional regulator AlkR (alkR) (Acinetobacter baylyi (strain ATCC 33305 / BD413 / ADP1)).